Consider the following 154-residue polypeptide: Aminoalkylphosphonate N-acetyltransferase (154 aa).

Residues 14 to 154 (CELRHATTED…QSHFRFTKAL (141 aa)) form the N-acetyltransferase domain.

As to quaternary structure, homodimer. The cofactor is a divalent metal cation.

It catalyses the reaction aminomethylphosphonate + acetyl-CoA = 2-N-acetamidomethylphosphonate + CoA. The catalysed reaction is (S)-1-aminoethylphosphonate + acetyl-CoA = [(1S)-1-acetamidoethyl]phosphonate + CoA. Aminoalkylphosphonate N-acetyltransferase which is able to acetylate a range of aminoalkylphosphonic acids, including (S)-1-aminoethylphosphonate ((S)-1AEP) and 2-aminoethylphosphonate, using acetyl-CoA as acetyl donor. Its physiological role in S.typhimurium is unclear. However, by acetylating (S)-1AEP, PhnO would protect against the deleterious effects of (S)-1AEP, a structural analog of D-alanine that has antibacterial properties. This Salmonella typhimurium (strain LT2 / SGSC1412 / ATCC 700720) protein is Aminoalkylphosphonate N-acetyltransferase.